Here is a 201-residue protein sequence, read N- to C-terminus: FMN-dependent NADH:quinone oxidoreductase (201 aa).

FMN-binding positions include Ser-10, 16 to 18, 96 to 99, and 140 to 143; these read SQS, MYNF, and SRGG.

This sequence belongs to the azoreductase type 1 family. As to quaternary structure, homodimer. It depends on FMN as a cofactor.

It catalyses the reaction 2 a quinone + NADH + H(+) = 2 a 1,4-benzosemiquinone + NAD(+). The enzyme catalyses N,N-dimethyl-1,4-phenylenediamine + anthranilate + 2 NAD(+) = 2-(4-dimethylaminophenyl)diazenylbenzoate + 2 NADH + 2 H(+). Its function is as follows. Quinone reductase that provides resistance to thiol-specific stress caused by electrophilic quinones. In terms of biological role, also exhibits azoreductase activity. Catalyzes the reductive cleavage of the azo bond in aromatic azo compounds to the corresponding amines. This chain is FMN-dependent NADH:quinone oxidoreductase, found in Yersinia pseudotuberculosis serotype O:1b (strain IP 31758).